Consider the following 211-residue polypeptide: RNA chaperone ProQ (211 aa).

Residues 112–148 (ERRAVEKANNPKANKKRSVHHSGNKSENKKSAGKKFS) form a disordered region. Basic residues predominate over residues 124–134 (ANKKRSVHHSG).

The protein belongs to the ProQ family.

The protein resides in the cytoplasm. Its function is as follows. RNA chaperone with significant RNA binding, RNA strand exchange and RNA duplexing activities. In Histophilus somni (strain 2336) (Haemophilus somnus), this protein is RNA chaperone ProQ.